The chain runs to 338 residues: Acetoin:2,6-dichlorophenolindophenol oxidoreductase subunit beta (338 aa).

Tetramer of 2 alpha and 2 beta subunits.

Its pathway is ketone degradation; acetoin degradation. In terms of biological role, catalyzes the 2,6-dichlorophenolindophenol-dependent cleavage of acetoin into acetate and acetaldehyde, in vitro. The beta subunit is probably not the catalytic subunit of the enzyme. The sequence is that of Acetoin:2,6-dichlorophenolindophenol oxidoreductase subunit beta (acoB) from Cupriavidus necator (strain ATCC 17699 / DSM 428 / KCTC 22496 / NCIMB 10442 / H16 / Stanier 337) (Ralstonia eutropha).